The following is a 431-amino-acid chain: Tol-Pal system protein TolB (431 aa).

The signal sequence occupies residues 1-26; the sequence is MSLMTKLGFRALVASCLITAGSAANA. The disordered stretch occupies residues 406 to 431; the sequence is DGSAPPQILSVQGGSVREPSWGPFMQ.

This sequence belongs to the TolB family. The Tol-Pal system is composed of five core proteins: the inner membrane proteins TolA, TolQ and TolR, the periplasmic protein TolB and the outer membrane protein Pal. They form a network linking the inner and outer membranes and the peptidoglycan layer.

Its subcellular location is the periplasm. Its function is as follows. Part of the Tol-Pal system, which plays a role in outer membrane invagination during cell division and is important for maintaining outer membrane integrity. The protein is Tol-Pal system protein TolB of Burkholderia orbicola (strain AU 1054).